The chain runs to 908 residues: MRKNKVLIGLFFCIALTVIFLKKIVNVIINIKWFREVGYLSVYLKRFTSVISLFILVFLICFVAIKTYCRSIKKNLSKNESFIDVDIESKSKGKKIINALTLIISLFIALNFSLGYWDKILEFMNSSKFNVKDPIFNMDISFFIFKLPLIESIYNSLLSLLILLAVITVIVYMFLNIKDRVTLGHKIDRNFININNFKSGITKFAGKQLAILGALLLLCISVGYLIKAWNLSYSPRGVAFGASYTDTKITLKFYIAISIVSIISSIIVAFSILKSKVKPIISCVILIAVLVISERVVSGAWQMLVVKSNERRLETPFIEYNMKYTKKAFGIANVKEQLYPLTNVLNKKSLENNKETINNIKINSVGQALEFYNQVESKKNYYIFNDIDIDRYKINGKYNQVFIAPREIDYEKLQEKANTWQNKHLTYTHGYGVVMSKVNSVTAEGKPDFVIKDMPLVNTSGVEIKDPRIYYGEKTNEYAIVNTKLNEMDYLKDSGENATKNYDGDSGIKMSFINRILFAINKGDMKFLLSSDITSDSRILMNRNIVNRVKKIAPFLKYDNNPYIVINNGKLYWVIDAYTVSNAYPFSEPIGDINYMRNSVKVIIDAVNGTTNFYIIDKNDPIISTYSKIFPGLFKNESEIKEGFREHFKYPQDYFAIQCKAMERYHVKNSGTFFSGQNVWDVAKTQKDIDGKKSVNEASYLIMKLPGEKNEEMILLQYFNQYQRENMIALFGARMDNSNYGNLVLYKFPTTKSETVNSPILFKQKIKQDTTISKELSLWDAKGSQVQFGDTMIIPIDNSLLYVEPLYLRADSERSIPEMKRVIVAYGDKLILAENIEKALSQLFDYDKKNDAKEEVILNKKESVPDELKDAKELYEKAIEAQKQGNWAEYGENIKRLGDILNKLNHPK.

A run of 7 helical transmembrane segments spans residues 8 to 28 (IGLFFCIALTVIFLKKIVNVI), 47 to 67 (FTSVISLFILVFLICFVAIKT), 96 to 116 (IINALTLIISLFIALNFSLGY), 157 to 177 (LLSLLILLAVITVIVYMFLNI), 209 to 229 (LAILGALLLLCISVGYLIKAW), 253 to 273 (FYIAISIVSIISSIIVAFSIL), and 280 to 300 (IISCVILIAVLVISERVVSGA).

The protein belongs to the UPF0182 family.

The protein resides in the cell membrane. In Clostridium novyi (strain NT), this protein is UPF0182 protein NT01CX_0852.